The chain runs to 217 residues: Snake venom metalloproteinase lebetase-4 (217 aa).

Residues 1 to 14 constitute a propeptide that is removed on maturation; the sequence is SCRKKASQLNLTPE. Gln15 carries the post-translational modification Pyrrolidone carboxylic acid. A Peptidase M12B domain is found at 21–217; the sequence is RYIELVIVAD…HNPQCILNQP (197 aa). The Ca(2+) site is built by Glu24 and Asp108. Intrachain disulfides connect Cys132–Cys212, Cys172–Cys196, and Cys174–Cys179. His157 is a binding site for Zn(2+). Residue Glu158 is part of the active site. Residues His161 and His167 each contribute to the Zn(2+) site. Positions 212 and 215 each coordinate Ca(2+).

It belongs to the venom metalloproteinase (M12B) family. P-I subfamily. Monomer. Zn(2+) serves as cofactor. Expressed by the venom gland.

It is found in the secreted. Its activity is regulated as follows. Fibrinolytic and caseinolytic activities are inhibited by Cd(2+), Cu(2+) and Co(2+) ions. Not inhibited by Mg(2+), Ca(2+) and Ba(2+). Also inhibited by EDTA, EGTA and 1,10-phenanthroline. Functionally, snake venom zinc metalloprotease that hydrolyzes the Aalpha-chain and more slowly the Bbeta-chain of fibrin and fibrinogen. Also hydrolyzes casein and B-chain of oxidized insulin. Its fibrinolytic activity is direct, without any plasminogen activation. Inhibits ADP-induced and collagen-induced platelet aggregation. Shows low hemorrhagic activity. Cleaves the plasma proteinase inhibitors alpha(2)-macroglobulin (A2M) and alpha(2)M-related pregnancy zone protein (PZP), and is inhibited by them. The chain is Snake venom metalloproteinase lebetase-4 from Macrovipera lebetinus (Levantine viper).